A 319-amino-acid polypeptide reads, in one-letter code: Aspartate carbamoyltransferase catalytic subunit (319 aa).

2 residues coordinate carbamoyl phosphate: Arg-65 and Thr-66. Residue Lys-93 coordinates L-aspartate. Residues Arg-115, His-149, and Gln-152 each contribute to the carbamoyl phosphate site. Residues Arg-182 and Arg-237 each coordinate L-aspartate. Residues Gly-278 and Pro-279 each contribute to the carbamoyl phosphate site.

The protein belongs to the aspartate/ornithine carbamoyltransferase superfamily. ATCase family. In terms of assembly, heterododecamer (2C3:3R2) of six catalytic PyrB chains organized as two trimers (C3), and six regulatory PyrI chains organized as three dimers (R2).

It catalyses the reaction carbamoyl phosphate + L-aspartate = N-carbamoyl-L-aspartate + phosphate + H(+). It participates in pyrimidine metabolism; UMP biosynthesis via de novo pathway; (S)-dihydroorotate from bicarbonate: step 2/3. Its function is as follows. Catalyzes the condensation of carbamoyl phosphate and aspartate to form carbamoyl aspartate and inorganic phosphate, the committed step in the de novo pyrimidine nucleotide biosynthesis pathway. This is Aspartate carbamoyltransferase catalytic subunit from Dechloromonas aromatica (strain RCB).